We begin with the raw amino-acid sequence, 293 residues long: Ubiquinone biosynthesis protein COQ9-B, mitochondrial (293 aa).

Residues 21 to 73 (LRSDDQKQPPFSSSSTHAETPEHAEEQYQQQQSPPRYTDQAGEESEDYESEEQ) form a disordered region. The segment covering 29 to 38 (PPFSSSSTHA) has biased composition (polar residues). A compositionally biased stretch (acidic residues) spans 61-72 (AGEESEDYESEE). Position 219 (Arg-219) interacts with a 1,2-diacylglycero-3-phosphoethanolamine.

The protein belongs to the COQ9 family. Homodimer. Heterodimer; two heterodimers of COQ7:COQ9 come together on the same side of the lipid pseudo-bilayer and form a curved tetramer with a hydrophobic surface suitable for membrane interaction. These two tetramers assemble into a soluble octamer with a pseudo-bilayer of lipids captured within. Interacts with COQ7; this interaction allows ubiquinone (CoQ) isoprene intermediates presentation to COQ7 and facilitates the COQ7-mediated hydroxylase step.

It is found in the mitochondrion. Its pathway is cofactor biosynthesis; ubiquinone biosynthesis. Membrane-associated protein that warps the membrane surface to access and bind aromatic isoprenes with high specificity, including ubiquinone (CoQ) isoprene intermediates and presents them directly to COQ7, therefore facilitating the COQ7-mediated hydroxylase step. Participates in the biosynthesis of coenzyme Q, also named ubiquinone, an essential lipid-soluble electron transporter for aerobic cellular respiration. This chain is Ubiquinone biosynthesis protein COQ9-B, mitochondrial (coq9-b), found in Xenopus laevis (African clawed frog).